Reading from the N-terminus, the 525-residue chain is FNIP repeat-containing protein DDB_G0274617 (525 aa).

The stretch at 65–107 (YQHEIKKEMLPSSIISIIFYNIKNILSSDSIPDTVKFLGFNGY) is one FNIP repeat.

This Dictyostelium discoideum (Social amoeba) protein is FNIP repeat-containing protein DDB_G0274617.